Reading from the N-terminus, the 453-residue chain is MKFFALAALFASTVNSIAVDGLIPGARVIPANDVVALKKAGAYHQKHHHRRTVIIRSSSSDEDDVSADFLWGIKRANHGGRLLLQNGKKYVIGKKLDLTFLKDIEVQLDGELKFTNDVPYWQANNFYYDFQKSISFWRWGGEDIKIFGSGVLNGNGQRWYNEFAGQEILDPNNKYYRPILFVTENATRVSVEGITQLNSPCWTNFFVRTKDISFDNVFIHAYSTNASALPKNTDGFDTLNVDGLTVTNTRVDIGDDCLSPKPNTTNVFVKNLWCNGTHGASMGSIGQYPGVLDIIENVWIENVTLLNGENGARLKAWAGPDVGYGRINNVTYKNIHVENTDNPIVLDQCYFNINATQCAAYPSRVNFTNIVFEDIYGTSSGKRGKVVADLTCSPNAVCSGIRLKNIHLTSPAGSPPVIVCDGIQGDIGVECQSSSNSTTRRSVDLARSLKYRA.

Residues 1 to 16 form the signal peptide; it reads MKFFALAALFASTVNS. 2 N-linked (GlcNAc...) asparagine glycosylation sites follow: Asn185 and Asn225. Residue Asp255 is the Proton donor of the active site. Cys257 and Cys274 are oxidised to a cystine. N-linked (GlcNAc...) asparagine glycosylation is found at Asn263 and Asn275. The active site involves His278. PbH1 repeat units lie at residues 295–316 and 327–348; these read IENVWIENVTLLNGENGARLKA and INNVTYKNIHVENTDNPIVLDQ. Asn302, Asn329, Asn354, and Asn366 each carry an N-linked (GlcNAc...) asparagine glycan. The PbH1 3 repeat unit spans residues 362 to 405; that stretch reads PSRVNFTNIVFEDIYGTSSGKRGKVVADLTCSPNAVCSGIRLKN. A disulfide bond links Cys392 and Cys398. Asn436 carries N-linked (GlcNAc...) asparagine glycosylation.

It belongs to the glycosyl hydrolase 28 family.

It is found in the secreted. It carries out the reaction [(1-&gt;4)-alpha-D-galacturonosyl](n) + H2O = alpha-D-galacturonate + [(1-&gt;4)-alpha-D-galacturonosyl](n-1). In terms of biological role, specific in hydrolyzing the terminal glycosidic bond of polygalacturonic acid and oligogalacturonates. The polypeptide is Probable exopolygalacturonase B (pgxB) (Aspergillus fumigatus (strain ATCC MYA-4609 / CBS 101355 / FGSC A1100 / Af293) (Neosartorya fumigata)).